Here is a 133-residue protein sequence, read N- to C-terminus: p53 and DNA damage-regulated protein 1 (133 aa).

Belongs to the prefoldin subunit beta family. In terms of assembly, component of the PAQosome complex which is responsible for the biogenesis of several protein complexes and which consists of R2TP complex members RUVBL1, RUVBL2, RPAP3 and PIH1D1, URI complex members PFDN2, PFDN6, PDRG1, UXT and URI1 as well as ASDURF, POLR2E and DNAAF10/WDR92. In terms of tissue distribution, predominantly expressed in normal testis and exhibits reduced but detectable expression in other organs.

The protein resides in the cytoplasm. Functionally, may play a role in chaperone-mediated protein folding. The sequence is that of p53 and DNA damage-regulated protein 1 (PDRG1) from Homo sapiens (Human).